The primary structure comprises 110 residues: MSDAAVDTSSEITTKDLKEKKEVVEEAENGREAPANGNANEENGEQEADNEVDEEEEEGGEEEEEEEEGDGEEEDGDEDEEAEAATGKRAAEDDEDDDVDTKKQKTDEDD.

An N-acetylmethionine modification is found at Met1. A disordered region spans residues 1 to 110 (MSDAAVDTSS…TKKQKTDEDD (110 aa)). Ser2 carries the N-acetylserine; in Prothymosin alpha, N-terminally processed modification. Ser2 is subject to Phosphoserine. Residue Thr8 is modified to Phosphothreonine; by CK2. 2 positions are modified to phosphoserine: Ser9 and Ser10. Phosphothreonine; by CK2 is present on residues Thr13 and Thr14. Residues 13 to 31 (TTKDLKEKKEVVEEAENGR) show a composition bias toward basic and acidic residues. Lys15 carries the post-translational modification N6-acetyllysine; alternate. Lys15 is modified (N6-succinyllysine; alternate). The segment covering 32 to 41 (EAPANGNANE) has biased composition (low complexity). Acidic residues predominate over residues 42 to 83 (ENGEQEADNEVDEEEEEGGEEEEEEEEGDGEEEDGDEDEEAE). Residues 100–110 (DTKKQKTDEDD) show a composition bias toward basic and acidic residues. Residue Thr101 is modified to Phosphothreonine. Lys102 carries the post-translational modification N6-acetyllysine; alternate. Residue Lys102 forms a Glycyl lysine isopeptide (Lys-Gly) (interchain with G-Cter in SUMO2); alternate linkage. At Thr106 the chain carries Phosphothreonine.

The protein belongs to the pro/parathymosin family. As to quaternary structure, interacts with NUPR1; regulates apoptotic process. Covalently linked to a small RNA of about 20 nucleotides.

The protein resides in the nucleus. Functionally, prothymosin alpha may mediate immune function by conferring resistance to certain opportunistic infections. The protein is Prothymosin alpha (PTMA) of Bos taurus (Bovine).